A 439-amino-acid polypeptide reads, in one-letter code: Glutamate-1-semialdehyde 2,1-aminomutase (439 aa).

The residue at position 273 (Lys273) is an N6-(pyridoxal phosphate)lysine.

It belongs to the class-III pyridoxal-phosphate-dependent aminotransferase family. HemL subfamily. In terms of assembly, homodimer. The cofactor is pyridoxal 5'-phosphate.

It localises to the cytoplasm. The catalysed reaction is (S)-4-amino-5-oxopentanoate = 5-aminolevulinate. It participates in porphyrin-containing compound metabolism; protoporphyrin-IX biosynthesis; 5-aminolevulinate from L-glutamyl-tRNA(Glu): step 2/2. This chain is Glutamate-1-semialdehyde 2,1-aminomutase, found in Paenarthrobacter aurescens (strain TC1).